We begin with the raw amino-acid sequence, 733 residues long: DNA-binding protein SATB2 (733 aa).

The segment at 1–47 is disordered; sequence MERRSESPCLRDSPDRRSGSPDVKGPPPVKVARLEQNGSPMGARGRP. Position 20 is a phosphoserine (Ser-20). Residues Lys-24 and Lys-30 each participate in a glycyl lysine isopeptide (Lys-Gly) (interchain with G-Cter in SUMO2) cross-link. Ser-39 is subject to Phosphoserine. Residues 57–158 form the CMP domain; it reads GLMIPVFCVV…VVTLKIQLQS (102 aa). Lys-161 participates in a covalent cross-link: Glycyl lysine isopeptide (Lys-Gly) (interchain with G-Cter in SUMO2). The 74-residue stretch at 161-234 folds into the CUTL domain; that stretch reads KLEDLPAEQW…WYKKYKKIKV (74 aa). Lys-233 is covalently cross-linked (Glycyl lysine isopeptide (Lys-Gly) (interchain with G-Cter in SUMO)). Residue Lys-350 forms a Glycyl lysine isopeptide (Lys-Gly) (interchain with G-Cter in SUMO); alternate linkage. Residue Lys-350 forms a Glycyl lysine isopeptide (Lys-Gly) (interchain with G-Cter in SUMO2); alternate linkage. Residues 350–437 constitute a DNA-binding region (CUT 1); sequence KPEPTNSSVE…ERDRIYQDER (88 aa). The segment at 435-473 is disordered; sequence DERERSMNPNVSMVSSASSSPSSSRTPQAKTSTPTTDLP. Over residues 441–458 the composition is skewed to low complexity; it reads MNPNVSMVSSASSSPSSS. At Ser-454 the chain carries Phosphoserine. Residues 459 to 470 are compositionally biased toward polar residues; sequence RTPQAKTSTPTT. Phosphothreonine is present on Thr-467. Positions 473–560 form a DNA-binding region, CUT 2; that stretch reads PIKVDGANIN…ERDVIYEEES (88 aa). Lys-475 participates in a covalent cross-link: Glycyl lysine isopeptide (Lys-Gly) (interchain with G-Cter in SUMO2). Low complexity predominate over residues 580–593; the sequence is QVLHRQQSQPAKES. Disordered stretches follow at residues 580-617 and 694-733; these read QVLH…KPRS and LLTE…IDQR. Ser-594 carries the phosphoserine modification. A DNA-binding region (homeobox) is located at residues 615–674; it reads PRSRTKISLEALGILQSFIHDVGLYPDQEAIHTLSAQLDLPKHTIIKFFQNQRYHVKHHG. A compositionally biased stretch (acidic residues) spans 694–708; it reads LLTESEENDSEEGSE. The span at 709 to 733 shows a compositional bias: basic and acidic residues; it reads EMYKVEAEEENADKSKAAPAEIDQR. Lys-724 participates in a covalent cross-link: Glycyl lysine isopeptide (Lys-Gly) (interchain with G-Cter in SUMO2).

This sequence belongs to the CUT homeobox family. In terms of assembly, interacts with ATF4 and RUNX2; resulting in enhanced DNA binding and transactivation by these transcription factors. Interacts with PIAS1. Post-translationally, sumoylated by PIAS1. Sumoylation promotes nuclear localization, but represses transcription factor activity. As to expression, high expression in adult brain, moderate expression in fetal brain, and weak expression in adult liver, kidney, and spinal cord and in select brain regions, including amygdala, corpus callosum, caudate nucleus, and hippocampus.

It localises to the nucleus matrix. Binds to DNA, at nuclear matrix- or scaffold-associated regions. Thought to recognize the sugar-phosphate structure of double-stranded DNA. Transcription factor controlling nuclear gene expression, by binding to matrix attachment regions (MARs) of DNA and inducing a local chromatin-loop remodeling. Acts as a docking site for several chromatin remodeling enzymes and also by recruiting corepressors (HDACs) or coactivators (HATs) directly to promoters and enhancers. Required for the initiation of the upper-layer neurons (UL1) specific genetic program and for the inactivation of deep-layer neurons (DL) and UL2 specific genes, probably by modulating BCL11B expression. Repressor of Ctip2 and regulatory determinant of corticocortical connections in the developing cerebral cortex. May play an important role in palate formation. Acts as a molecular node in a transcriptional network regulating skeletal development and osteoblast differentiation. This Homo sapiens (Human) protein is DNA-binding protein SATB2 (SATB2).